The following is a 605-amino-acid chain: Microtubule-associated protein VP10 (605 aa).

In terms of assembly, interacts with VP1.

Its subcellular location is the virion. It localises to the host cytoplasm. The protein localises to the host cytoskeleton. Minor inner capsid component. Displays NTPase and RNA 5'-triphosphatase (RTPase) activities. May function as a cofactor of polymerase VP1. Associates with microtubules and plays a role in the formation, structural organization and morphology of viral inclusions, where the assembly of cores and the replication of viral RNA occur. The chain is Microtubule-associated protein VP10 from Colorado tick fever virus (strain USA/Florio N-7180) (CTFV).